A 72-amino-acid polypeptide reads, in one-letter code: Translation initiation factor IF-1 (72 aa).

An S1-like domain is found at 1–72 (MAKDDVIVVD…DKGRITHRYK (72 aa)).

This sequence belongs to the IF-1 family. Component of the 30S ribosomal translation pre-initiation complex which assembles on the 30S ribosome in the order IF-2 and IF-3, IF-1 and N-formylmethionyl-tRNA(fMet); mRNA recruitment can occur at any time during PIC assembly.

It localises to the cytoplasm. Its function is as follows. One of the essential components for the initiation of protein synthesis. Stabilizes the binding of IF-2 and IF-3 on the 30S subunit to which N-formylmethionyl-tRNA(fMet) subsequently binds. Helps modulate mRNA selection, yielding the 30S pre-initiation complex (PIC). Upon addition of the 50S ribosomal subunit IF-1, IF-2 and IF-3 are released leaving the mature 70S translation initiation complex. This chain is Translation initiation factor IF-1, found in Aliarcobacter butzleri (strain RM4018) (Arcobacter butzleri).